Here is a 433-residue protein sequence, read N- to C-terminus: UDP-N-acetylglucosamine 1-carboxyvinyltransferase 2 (433 aa).

23–24 (KN) contributes to the phosphoenolpyruvate binding site. Arginine 96 provides a ligand contact to UDP-N-acetyl-alpha-D-glucosamine. Catalysis depends on cysteine 120, which acts as the Proton donor. Residue cysteine 120 is modified to 2-(S-cysteinyl)pyruvic acid O-phosphothioketal. UDP-N-acetyl-alpha-D-glucosamine contacts are provided by residues 125–129 (RPIDL), aspartate 308, and valine 330.

It belongs to the EPSP synthase family. MurA subfamily.

The protein resides in the cytoplasm. The enzyme catalyses phosphoenolpyruvate + UDP-N-acetyl-alpha-D-glucosamine = UDP-N-acetyl-3-O-(1-carboxyvinyl)-alpha-D-glucosamine + phosphate. The protein operates within cell wall biogenesis; peptidoglycan biosynthesis. In terms of biological role, cell wall formation. Adds enolpyruvyl to UDP-N-acetylglucosamine. The sequence is that of UDP-N-acetylglucosamine 1-carboxyvinyltransferase 2 from Enterococcus faecalis (strain ATCC 700802 / V583).